Here is a 502-residue protein sequence, read N- to C-terminus: Protein ANKUB1 (502 aa).

This Homo sapiens (Human) protein is Protein ANKUB1 (ANKUB1).